A 143-amino-acid chain; its full sequence is Large ribosomal subunit protein uL11 (143 aa).

It belongs to the universal ribosomal protein uL11 family. As to quaternary structure, part of the ribosomal stalk of the 50S ribosomal subunit. Interacts with L10 and the large rRNA to form the base of the stalk. L10 forms an elongated spine to which L12 dimers bind in a sequential fashion forming a multimeric L10(L12)X complex. One or more lysine residues are methylated.

Its function is as follows. Forms part of the ribosomal stalk which helps the ribosome interact with GTP-bound translation factors. This is Large ribosomal subunit protein uL11 from Teredinibacter turnerae (strain ATCC 39867 / T7901).